Reading from the N-terminus, the 441-residue chain is DNA double-strand break repair protein Mre11 (441 aa).

Residues aspartate 9, histidine 11, aspartate 50, and asparagine 85 each coordinate Mn(2+). The active-site Proton donor is the histidine 86. 3 residues coordinate Mn(2+): histidine 150, aspartate 181, and histidine 183. The disordered stretch occupies residues 360-441 (ESLLSDDPDA…SRDSSLGDFA (82 aa)). Composition is skewed to acidic residues over residues 379 to 403 (AEAE…EDTA) and 411 to 425 (TDTD…DSET).

This sequence belongs to the MRE11/RAD32 family. Homodimer. Forms a heterotetramer composed of two Mre11 subunits and two Rad50 subunits. The cofactor is Mn(2+).

With respect to regulation, nuclease activity is regulated by Rad50. Functionally, part of the Rad50/Mre11 complex, which is involved in the early steps of DNA double-strand break (DSB) repair. Mre11 binds to DSB ends and has both double-stranded 3'-5' exonuclease activity and single-stranded endonuclease activity. In polyploid organisms, the Rad50/Mre11 complex appears to restrain the repair of double-strand breaks by homologous recombination, allowing another pathway to act as the primary mode of repair. The sequence is that of DNA double-strand break repair protein Mre11 from Haloferax volcanii (strain ATCC 29605 / DSM 3757 / JCM 8879 / NBRC 14742 / NCIMB 2012 / VKM B-1768 / DS2) (Halobacterium volcanii).